Consider the following 151-residue polypeptide: Neuroglobin (151 aa).

The 149-residue stretch at 1–149 folds into the Globin domain; it reads MERPEQELIR…VVQAMSRGWD (149 aa). Heme b contacts are provided by H64 and H96.

It belongs to the globin family. Monomer. Homodimer and homotetramer; disulfide-linked. Mainly monomeric but also detected as part of homodimers and homotetramers. Interacts with 14-3-3 proteins; regulates the phosphorylation of NGB. Could interact (ferrous form) with G-alpha(i) proteins (GTP-bound form). In terms of processing, phosphorylated during hypoxia by ERK1/ERK2. Phosphorylation regulates the heme pocket hexacoordination preventing the association of His-64 with the heme metal center. Thereby, promotes the access of dioxygen and nitrite to the heme and stimulates the nitrite reductase activity. Phosphorylation during hypoxia is stabilized by 14-3-3 proteins.

It is found in the cytoplasm. The protein localises to the cytosol. Its subcellular location is the mitochondrion matrix. The catalysed reaction is Fe(III)-heme b-[protein] + nitric oxide + H2O = Fe(II)-heme b-[protein] + nitrite + 2 H(+). Monomeric globin with a bis-histidyl six-coordinate heme-iron atom through which it can bind dioxygen, carbon monoxide and nitric oxide. Could help transport oxygen and increase its availability to the metabolically active neuronal tissues, though its low quantity in tissues as well as its high affinity for dioxygen, which may limit its oxygen-releasing ability, argue against it. The ferrous/deoxygenated form exhibits a nitrite reductase activity and it could produce nitric oxide which in turn inhibits cellular respiration in response to hypoxia. In its ferrous/deoxygenated state, it may also exhibit GDI (Guanine nucleotide Dissociation Inhibitor) activity toward heterotrimeric G-alpha proteins, thereby regulating signal transduction to facilitate neuroprotective responses in the wake of hypoxia and associated oxidative stress. The protein is Neuroglobin of Oryctolagus cuniculus (Rabbit).